A 430-amino-acid polypeptide reads, in one-letter code: Cytochrome P450 monooxygenase FGSG_15680 (430 aa).

Position 351 (Cys351) interacts with heme.

Belongs to the cytochrome P450 family. Heme is required as a cofactor.

The protein operates within mycotoxin biosynthesis. Its function is as follows. Cytochrome P450 monooxygenase; part of the gene cluster that mediates the biosynthesis of gramillins A and B, bicyclic lipopeptides that induce cell death in maize leaves but not in wheat leaves. The nonribosomal peptide synthetase GRA1 incorporates respectively a glutamic adic (Glu), a leucine (Leu), a serine (Ser), a hydroxyglutamine (HOGln), a 2-amino decanoic acid, and 2 cysteins (CysB and CysA). The biosynthesis of 2-amino decanoic acid incorporated in gramillins could be initiated by a fatty acid synthase composed of the alpha and beta subunits FGSG_00036 and FGSG_11656. The cytochrome P450 monooxygenase FGSG_15680 could hydroxylate the fatty acid chain. Subsequent oxidation to the ketone by the oxidoreductase FGSG_00048 and transamination by aminotransferase FGSG_00049 could form 2-amino-decanoic acid. On the other hand, FGSG_15680 could also be responsible for the HO-modified glutamine at the gamma-position. Whether hydroxylation occurs on the fully assembled product or on the Gln residue prior to assembly into the gramillins requires further proof. The thioredoxin FGSG_00043 could also be required for the disulfide-bond formation between CysA and CysB. The specific involvement of the remaining proteins from the cluster is more difficult to discern, but could have broader regulatory (FGSG_00040 and FGSG_11657) or enzymatic functions (FGSG_00044 and FGSG_00045). The final C-domain of GRA1 does not possess the expected sequence of a termination CT domain, often implicated in macrocyclization and release of a cyclopeptidein fungal NRPs; and the thioesterase FGSG_00047 may act in concert with the terminal C-domain of GRA1 to catalyze the formation of the macrocyclic anhydride and release of the products. The polypeptide is Cytochrome P450 monooxygenase FGSG_15680 (Gibberella zeae (strain ATCC MYA-4620 / CBS 123657 / FGSC 9075 / NRRL 31084 / PH-1) (Wheat head blight fungus)).